Reading from the N-terminus, the 450-residue chain is Glucose-6-phosphate isomerase (450 aa).

Phosphothreonine is present on threonine 39. Glutamate 291 (proton donor) is an active-site residue. Active-site residues include histidine 312 and lysine 426.

The protein belongs to the GPI family.

It localises to the cytoplasm. The enzyme catalyses alpha-D-glucose 6-phosphate = beta-D-fructose 6-phosphate. It participates in carbohydrate biosynthesis; gluconeogenesis. Its pathway is carbohydrate degradation; glycolysis; D-glyceraldehyde 3-phosphate and glycerone phosphate from D-glucose: step 2/4. Catalyzes the reversible isomerization of glucose-6-phosphate to fructose-6-phosphate. The sequence is that of Glucose-6-phosphate isomerase from Bacillus cereus (strain ATCC 10987 / NRS 248).